Reading from the N-terminus, the 694-residue chain is Elongation factor G 2 (694 aa).

A tr-type G domain is found at 8–282 (TAIRNIGIMA…AVVSYLPSPL (275 aa)). GTP-binding positions include 17-24 (AHIDAGKT), 81-85 (DTPGH), and 135-138 (NKMD).

Belongs to the TRAFAC class translation factor GTPase superfamily. Classic translation factor GTPase family. EF-G/EF-2 subfamily.

It is found in the cytoplasm. Its function is as follows. Catalyzes the GTP-dependent ribosomal translocation step during translation elongation. During this step, the ribosome changes from the pre-translocational (PRE) to the post-translocational (POST) state as the newly formed A-site-bound peptidyl-tRNA and P-site-bound deacylated tRNA move to the P and E sites, respectively. Catalyzes the coordinated movement of the two tRNA molecules, the mRNA and conformational changes in the ribosome. The protein is Elongation factor G 2 of Syntrophomonas wolfei subsp. wolfei (strain DSM 2245B / Goettingen).